The chain runs to 550 residues: Glucose-6-phosphate isomerase (550 aa).

Glu-356 acts as the Proton donor in catalysis. Active-site residues include His-387 and Lys-515.

This sequence belongs to the GPI family.

It is found in the cytoplasm. It catalyses the reaction alpha-D-glucose 6-phosphate = beta-D-fructose 6-phosphate. It participates in carbohydrate biosynthesis; gluconeogenesis. It functions in the pathway carbohydrate degradation; glycolysis; D-glyceraldehyde 3-phosphate and glycerone phosphate from D-glucose: step 2/4. In terms of biological role, catalyzes the reversible isomerization of glucose-6-phosphate to fructose-6-phosphate. In Aliivibrio fischeri (strain MJ11) (Vibrio fischeri), this protein is Glucose-6-phosphate isomerase.